The following is a 495-amino-acid chain: Cytochrome P450 2E1 (495 aa).

298–303 serves as a coordination point for substrate; that stretch reads FAGTET. C437 contributes to the heme binding site.

This sequence belongs to the cytochrome P450 family. As to quaternary structure, interacts with chaperones HSP70 and HSP90; this interaction is required for initial targeting to mitochondria. Heme is required as a cofactor.

Its subcellular location is the endoplasmic reticulum membrane. It localises to the microsome membrane. It is found in the mitochondrion inner membrane. It catalyses the reaction an organic molecule + reduced [NADPH--hemoprotein reductase] + O2 = an alcohol + oxidized [NADPH--hemoprotein reductase] + H2O + H(+). It carries out the reaction (5Z,8Z,11Z)-eicosatrienoate + reduced [NADPH--hemoprotein reductase] + O2 = 19-hydroxy-(5Z,8Z,11Z)-eicosatrienoate + oxidized [NADPH--hemoprotein reductase] + H2O + H(+). The enzyme catalyses (5Z,8Z,11Z,14Z,17Z)-eicosapentaenoate + reduced [NADPH--hemoprotein reductase] + O2 = 19-hydroxy-(5Z,8Z,11Z,14Z,17Z)-eicosapentaenoate + oxidized [NADPH--hemoprotein reductase] + H2O + H(+). The catalysed reaction is (4Z,7Z,10Z,13Z,16Z,19Z)-docosahexaenoate + reduced [NADPH--hemoprotein reductase] + O2 = 21-hydroxy-(4Z,7Z,10Z,13Z,16Z,19Z)-docosahexaenoate + oxidized [NADPH--hemoprotein reductase] + H2O + H(+). It catalyses the reaction dodecanoate + reduced [NADPH--hemoprotein reductase] + O2 = 11-hydroxydodecanoate + oxidized [NADPH--hemoprotein reductase] + H2O + H(+). It carries out the reaction tetradecanoate + reduced [NADPH--hemoprotein reductase] + O2 = 13-hydroxytetradecanoate + oxidized [NADPH--hemoprotein reductase] + H2O + H(+). The enzyme catalyses 4-nitrophenol + NADPH + O2 + H(+) = 4-nitrocatechol + NADP(+) + H2O. It participates in lipid metabolism; fatty acid metabolism. Its activity is regulated as follows. The omega-1 hydroxylase activity is stimulated by cytochrome b5. In terms of biological role, a cytochrome P450 monooxygenase involved in the metabolism of fatty acids. Mechanistically, uses molecular oxygen inserting one oxygen atom into a substrate, and reducing the second into a water molecule, with two electrons provided by NADPH via cytochrome P450 reductase (NADPH--hemoprotein reductase). Catalyzes the hydroxylation of carbon-hydrogen bonds. Hydroxylates fatty acids specifically at the omega-1 position displaying the highest catalytic activity for saturated fatty acids. May be involved in the oxidative metabolism of xenobiotics. The sequence is that of Cytochrome P450 2E1 (CYP2E1) from Bos taurus (Bovine).